The chain runs to 197 residues: Protein RmlC homolog (197 aa).

H76 serves as the catalytic Proton acceptor. The active-site Proton donor is the Y140.

Its function is as follows. Could catalyze a 3,5-epimerization. The protein is Protein RmlC homolog (rfbC) of Streptococcus pyogenes serotype M6 (strain ATCC BAA-946 / MGAS10394).